Reading from the N-terminus, the 398-residue chain is Cytochrome P450 165B3 (398 aa).

Residue cysteine 347 participates in heme binding.

This sequence belongs to the cytochrome P450 family. Heme is required as a cofactor.

The protein operates within antibiotic biosynthesis; vancomycin biosynthesis. Its function is as follows. Involved in the coupling of aromatic side chains of the heptapeptide of vancomycin. This chain is Cytochrome P450 165B3 (cyp165B3), found in Amycolatopsis orientalis (Nocardia orientalis).